Here is a 309-residue protein sequence, read N- to C-terminus: Bifunctional methylenetetrahydrofolate dehydrogenase/cyclohydrolase, mitochondrial (309 aa).

Belongs to the tetrahydrofolate dehydrogenase/cyclohydrolase family. As to quaternary structure, homodimer. The cofactor is Mg(2+).

Its subcellular location is the mitochondrion. The catalysed reaction is (6R)-5,10-methylene-5,6,7,8-tetrahydrofolate + NAD(+) = (6R)-5,10-methenyltetrahydrofolate + NADH. It carries out the reaction (6R)-5,10-methenyltetrahydrofolate + H2O = (6R)-10-formyltetrahydrofolate + H(+). May play a role in spermatogenesis. This Drosophila melanogaster (Fruit fly) protein is Bifunctional methylenetetrahydrofolate dehydrogenase/cyclohydrolase, mitochondrial (Nmdmc).